A 261-amino-acid polypeptide reads, in one-letter code: Putative diacylated glycolipid transporter LprF (261 aa).

An N-terminal signal peptide occupies residues 1 to 38 (MNGLISQACGSHRPRRPSSLGAVAILIAATLFATVVAG). Cys39 is lipidated: N-palmitoyl cysteine. Cys39 is lipidated: S-diacylglycerol cysteine. Residues 42 to 61 (KPTTASSPSPGSPSPEAQQI) form a disordered region.

Belongs to the LppX/LprAFG lipoprotein family. In terms of assembly, monomer. In terms of processing, modified by Lgt on Cys-39 with an S-linked diacylglycerol with a mixture of C16, C18 and C19 fatty acids (palmitic, stearic and tuberculostearic acid respectively), signal peptide is removed by LspA, modified by Lnt with an amide-linked mixture of C16 and C19 fatty acids.

It localises to the cell membrane. Its function is as follows. Might be involved in transporting short diacylated glycolipids to the cell outer membrane. Binds glycolipids that contain a diacylated glycerophosphate or a diacylated phosphatidylinositol moiety with C14 and C16 chains (upon overexpression in M.smegmatis; M.smegmatis does not encode this gene). Overexpression in M.smegmatis increases the cell wall glycolipid LAM/LM ratio (lipoarabinomannan/lipomannan), suggesting perhaps this protein is involved in the preferential translocation of diacylated LAM to the outer cell membrane. Overexpressing M.smegmatis cells adhere less well to hexadecane droplets, indicating decrease in the hydrophobicity of the cell surface, and have a slightly increased resistance to the antibiotic ethambutol. The chain is Putative diacylated glycolipid transporter LprF (lprF) from Mycobacterium bovis (strain ATCC BAA-935 / AF2122/97).